The following is a 481-amino-acid chain: Glutamine synthetase (481 aa).

Positions 22–106 constitute a GS beta-grasp domain; that stretch reads NEVEFVDFRF…VFCDVYDVYK (85 aa). Residues 114–481 form the GS catalytic domain; the sequence is PRSIAKKALK…PFEFITTYSC (368 aa). Positions 139, 141, 223, and 230 each coordinate Mg(2+). Residues 274–275 and glycine 275 contribute to the L-glutamate site; that span reads NG. A Mg(2+)-binding site is contributed by histidine 279. ATP-binding positions include 281-283 and serine 283; that span reads HVS. Residues arginine 331, glutamate 337, and arginine 349 each coordinate L-glutamate. Arginine 349 and arginine 354 together coordinate ATP. Glutamate 367 contributes to the Mg(2+) binding site. Arginine 369 contacts L-glutamate.

Belongs to the glutamine synthetase family. Oligomer of 12 subunits arranged in the form of two hexameric ring. Mg(2+) is required as a cofactor.

It localises to the cytoplasm. It catalyses the reaction L-glutamate + NH4(+) + ATP = L-glutamine + ADP + phosphate + H(+). The activity of this enzyme could be controlled by adenylation under conditions of abundant glutamine. In terms of biological role, catalyzes the ATP-dependent biosynthesis of glutamine from glutamate and ammonia. This is Glutamine synthetase from Helicobacter pylori (strain J99 / ATCC 700824) (Campylobacter pylori J99).